A 29-amino-acid chain; its full sequence is Cytochrome b6-f complex subunit 8 (29 aa).

The chain crosses the membrane as a helical span at residues 3–23 (ILALGWVSVLALFTWSIAMVV).

Belongs to the PetN family. As to quaternary structure, the 4 large subunits of the cytochrome b6-f complex are cytochrome b6, subunit IV (17 kDa polypeptide, PetD), cytochrome f and the Rieske protein, while the 4 small subunits are PetG, PetL, PetM and PetN. The complex functions as a dimer.

It localises to the cellular thylakoid membrane. In terms of biological role, component of the cytochrome b6-f complex, which mediates electron transfer between photosystem II (PSII) and photosystem I (PSI), cyclic electron flow around PSI, and state transitions. The chain is Cytochrome b6-f complex subunit 8 from Gloeothece citriformis (strain PCC 7424) (Cyanothece sp. (strain PCC 7424)).